The following is a 260-amino-acid chain: MADS-box transcription factor 29 (260 aa).

An MADS-box domain is found at 1-61; the sequence is MGRGKIEIKR…GKMFEYCSPT (61 aa). Positions 85–175 constitute a K-box domain; sequence DQQIFVEMTR…CRMINENHHQ (91 aa).

In terms of tissue distribution, expressed in developing seeds.

The protein localises to the nucleus. In terms of biological role, probable transcription factor. The protein is MADS-box transcription factor 29 (MADS29) of Oryza sativa subsp. japonica (Rice).